The primary structure comprises 156 residues: 6,7-dimethyl-8-ribityllumazine synthase (156 aa).

5-amino-6-(D-ribitylamino)uracil is bound by residues F22, 57–59 (AVE), and 81–83 (CVI). A (2S)-2-hydroxy-3-oxobutyl phosphate-binding site is contributed by 86 to 87 (GT). H89 (proton donor) is an active-site residue. 5-amino-6-(D-ribitylamino)uracil is bound at residue F114. R128 provides a ligand contact to (2S)-2-hydroxy-3-oxobutyl phosphate.

The protein belongs to the DMRL synthase family. Forms an icosahedral capsid composed of 60 subunits, arranged as a dodecamer of pentamers.

The catalysed reaction is (2S)-2-hydroxy-3-oxobutyl phosphate + 5-amino-6-(D-ribitylamino)uracil = 6,7-dimethyl-8-(1-D-ribityl)lumazine + phosphate + 2 H2O + H(+). It participates in cofactor biosynthesis; riboflavin biosynthesis; riboflavin from 2-hydroxy-3-oxobutyl phosphate and 5-amino-6-(D-ribitylamino)uracil: step 1/2. Its function is as follows. Catalyzes the formation of 6,7-dimethyl-8-ribityllumazine by condensation of 5-amino-6-(D-ribitylamino)uracil with 3,4-dihydroxy-2-butanone 4-phosphate. This is the penultimate step in the biosynthesis of riboflavin. The sequence is that of 6,7-dimethyl-8-ribityllumazine synthase from Vibrio cholerae serotype O1 (strain ATCC 39315 / El Tor Inaba N16961).